A 280-amino-acid polypeptide reads, in one-letter code: Cytochrome bc1 complex cytochrome c subunit (280 aa).

A helical transmembrane segment spans residues 25-45; it reads LSGGVLLLIALTIAGGLAAVL. 2 consecutive Cytochrome c domains span residues 60-140 and 161-239; these read ALLR…QANG and NDLG…KVAT. Residues Cys-73, Cys-76, His-77, Cys-174, Cys-177, and His-178 each contribute to the heme c site. Residues 258–278 form a helical membrane-spanning segment; sequence GMAMWIIGMVAAIGLALWIGA.

In terms of assembly, the cytochrome bc1 complex is composed of a cytochrome b (QcrB), the Rieske iron-sulfur protein (QcrA) and a diheme cytochrome c (QcrC) subunit. In terms of processing, binds 2 heme c groups covalently per subunit.

The protein resides in the cell membrane. The catalysed reaction is a quinol + 2 Fe(III)-[cytochrome c](out) = a quinone + 2 Fe(II)-[cytochrome c](out) + 2 H(+)(out). Cytochrome b subunit of the cytochrome bc1 complex, an essential component of the respiratory electron transport chain required for ATP synthesis. The bc1 complex catalyzes the oxidation of ubiquinol and the reduction of cytochrome c in the respiratory chain. The bc1 complex operates through a Q-cycle mechanism that couples electron transfer to generation of the proton gradient that drives ATP synthesis. This chain is Cytochrome bc1 complex cytochrome c subunit (qcrC), found in Mycobacterium bovis (strain ATCC BAA-935 / AF2122/97).